The primary structure comprises 185 residues: Putative lipoprotein LprB (185 aa).

The first 24 residues, 1 to 24 (MRRKVRRLTLAVSALVALFPAVAG), serve as a signal peptide directing secretion. Cysteine 25 is lipidated: N-palmitoyl cysteine. Residue cysteine 25 is the site of S-diacylglycerol cysteine attachment. A disordered region spans residues 26–50 (SDSGDNKPGATIPSTPANAEGRHGP).

The protein resides in the cell membrane. The polypeptide is Putative lipoprotein LprB (lprB) (Mycobacterium tuberculosis (strain CDC 1551 / Oshkosh)).